The primary structure comprises 262 residues: Capsid protein (262 aa).

The tract at residues 183 to 262 (APTIEAITRP…SHHRSPSPRK (80 aa)) is disordered. The short motif at 215 to 233 (RRRKVKTTVVYGRRRSKSR) is the Bipartite nuclear localization signal element. Basic residues predominate over residues 215–234 (RRRKVKTTVVYGRRRSKSRE). Ser-232 and Ser-245 each carry phosphoserine; by host. A compositionally biased stretch (basic residues) spans 252 to 262 (SSHHRSPSPRK). Positions 254 to 260 (HHRSPSP) are RNA binding.

Belongs to the avihepadnavirus core antigen family. In terms of assembly, homodimerizes, then multimerizes.

Its subcellular location is the virion. It localises to the host cytoplasm. In terms of biological role, self assembles to form an icosahedral capsid. Most capsid appear to be large particles with an icosahedral symmetry of T=4 and consist of 240 copies of capsid protein, though a fraction forms smaller T=3 particles consisting of 180 capsid proteins. Entering capsid are transported along microtubules to the nucleus. Phosphorylation of the capsid is thought to induce exposure of nuclear localization signal in the C-terminal portion of the capsid protein that allows binding to the nuclear pore complex via the importin (karyopherin-) alpha and beta. Capsids are imported in intact form through the nuclear pore into the nuclear basket, where it probably binds NUP153. Only capsids that contain the mature viral genome can release the viral DNA and capsid protein into the nucleoplasm. Immature capsids get stucked in the basket. Capsids encapsulate the pre-genomic RNA and the P protein. Pre-genomic RNA is reverse transcribed into DNA while the capsid is still in the cytoplasm. The capsid can then either be directed to the nucleus, providing more genome for transcription, or bud through the endoplasmic reticulum to provide new virions. The chain is Capsid protein (C) from Anas (ducks).